The following is a 313-amino-acid chain: Deoxyribonucleoside regulator (313 aa).

A DNA-binding region (H-T-H motif) is located at residues 23–42 (QQQIAEQLNISRPTVSRLLQ).

The protein belongs to the SorC transcriptional regulatory family. As to quaternary structure, homooctamer.

In terms of biological role, negative regulator of the dra-nupC-pdp operon. DeoR binds cooperatively to the operator DNA, which consists of a palindrome and a direct repeat sequence located 3' to the palindrome. The protein is Deoxyribonucleoside regulator of Bacillus subtilis (strain 168).